Here is a 309-residue protein sequence, read N- to C-terminus: N(5)-(carboxyethyl)ornithine synthase (309 aa).

The pyruvate site is built by R15, K71, and H92. 171–176 serves as a coordination point for NADP(+); it reads GSGNVA.

The protein belongs to the AlaDH/PNT family. CEOS subfamily. In terms of assembly, homotetramer.

It catalyses the reaction N(5)-[1(S)-1-carboxyethyl]-L-ornithine + NADP(+) + H2O = L-ornithine + pyruvate + NADPH + H(+). In terms of biological role, catalyzes the NADPH-dependent reductive condensation between pyruvic acid and the side chain amino group of L-ornithine to form N(5)-(L-1-carboxyethyl)-L-ornithine. To a lesser extent, can also use L-lysine as substrate (yielding N(6)-(L-1-carboxyethyl)-L-lysine). This chain is N(5)-(carboxyethyl)ornithine synthase (ceo), found in Lactococcus lactis subsp. lactis (strain IL1403) (Streptococcus lactis).